Reading from the N-terminus, the 257-residue chain is Imidazole glycerol phosphate synthase subunit HisF (257 aa).

Catalysis depends on residues D12 and D131.

This sequence belongs to the HisA/HisF family. As to quaternary structure, heterodimer of HisH and HisF.

The protein resides in the cytoplasm. The enzyme catalyses 5-[(5-phospho-1-deoxy-D-ribulos-1-ylimino)methylamino]-1-(5-phospho-beta-D-ribosyl)imidazole-4-carboxamide + L-glutamine = D-erythro-1-(imidazol-4-yl)glycerol 3-phosphate + 5-amino-1-(5-phospho-beta-D-ribosyl)imidazole-4-carboxamide + L-glutamate + H(+). Its pathway is amino-acid biosynthesis; L-histidine biosynthesis; L-histidine from 5-phospho-alpha-D-ribose 1-diphosphate: step 5/9. Functionally, IGPS catalyzes the conversion of PRFAR and glutamine to IGP, AICAR and glutamate. The HisF subunit catalyzes the cyclization activity that produces IGP and AICAR from PRFAR using the ammonia provided by the HisH subunit. This Marinobacter nauticus (strain ATCC 700491 / DSM 11845 / VT8) (Marinobacter aquaeolei) protein is Imidazole glycerol phosphate synthase subunit HisF.